The sequence spans 268 residues: AN1-type zinc finger protein 1 (268 aa).

Ala-2 bears the N-acetylalanine mark. 2 AN1-type zinc fingers span residues 4-52 (LDIG…VVKE) and 58-106 (EHKS…VAKP). The Zn(2+) site is built by Cys-10, Cys-15, Cys-25, Cys-28, Cys-33, His-36, His-42, Cys-44, Cys-64, Cys-69, Cys-79, Cys-82, Cys-87, His-90, His-96, and Cys-98. A ubiquitin-like region spans residues 160–260 (QTERTYFQVY…EYLNDEEQFL (101 aa)).

As to quaternary structure, associates with the 26S proteasome; this association occurs upon exposure to arsenite and is reduced in the presence of ATP. Interacts (via AN1-type 1 and 2 zinc fingers) with PSMD1; this interaction is increased upon arsenite treatment and occurs in an ATP-independent manner. Interacts with PSMC4. Interacts with PSMA1. Interacts (via its ubiquitin-like region) with VCP; this interaction occurs in an arsenite-dependent manner and is necessary for the recruitment of the ubiquitin-selective ATPase VCP to stress granules (SGs).

It localises to the cytoplasm. The protein resides in the stress granule. In terms of biological role, plays a role in the regulation of cytoplasmic stress granules (SGs) turnover. SGs are dynamic and transient cytoplasmic ribonucleoprotein assemblies important for cellular protein homeostasis when protein production is suspended after acute exogenous stress. Associates with SGs and is involved in the efficient and specific arsenite-induced clearance process of SGs through the recruitment of the ubiquitin-selective ATPase VCP and the 26S proteasome. This process requires both complexes for efficient degradation of damaged ubiquitinated SG proteins during recovery from arsenite stress, and hence avoiding aberrant cytoplasmic SGs degradation via autophagy. The chain is AN1-type zinc finger protein 1 from Mus musculus (Mouse).